A 558-amino-acid polypeptide reads, in one-letter code: Methionine--tRNA ligase 1 (558 aa).

A 'HIGH' region motif is present at residues 10 to 20; sequence PYINGIKHLGN. 4 residues coordinate Zn(2+): C142, C145, C155, and C158. Positions 332–336 match the 'KMSKS' region motif; that stretch reads KFSTS. T335 contacts ATP.

This sequence belongs to the class-I aminoacyl-tRNA synthetase family. MetG type 1 subfamily. Monomer. It depends on Zn(2+) as a cofactor.

It localises to the cytoplasm. It carries out the reaction tRNA(Met) + L-methionine + ATP = L-methionyl-tRNA(Met) + AMP + diphosphate. Functionally, is required not only for elongation of protein synthesis but also for the initiation of all mRNA translation through initiator tRNA(fMet) aminoacylation. The protein is Methionine--tRNA ligase 1 of Acaryochloris marina (strain MBIC 11017).